Consider the following 172-residue polypeptide: Translation initiation factor IF-3 (172 aa).

Belongs to the IF-3 family. As to quaternary structure, monomer.

The protein resides in the cytoplasm. IF-3 binds to the 30S ribosomal subunit and shifts the equilibrium between 70S ribosomes and their 50S and 30S subunits in favor of the free subunits, thus enhancing the availability of 30S subunits on which protein synthesis initiation begins. This Campylobacter concisus (strain 13826) protein is Translation initiation factor IF-3.